Reading from the N-terminus, the 297-residue chain is tRNA uridine(34) hydroxylase (297 aa).

The Rhodanese domain occupies 137 to 232; it reads RGDDVVFFDG…YGEKYGDKGL (96 aa). The Cysteine persulfide intermediate role is filled by C192.

Belongs to the TrhO family.

The catalysed reaction is uridine(34) in tRNA + AH2 + O2 = 5-hydroxyuridine(34) in tRNA + A + H2O. In terms of biological role, catalyzes oxygen-dependent 5-hydroxyuridine (ho5U) modification at position 34 in tRNAs. This Corynebacterium urealyticum (strain ATCC 43042 / DSM 7109) protein is tRNA uridine(34) hydroxylase.